The chain runs to 238 residues: Purine nucleoside phosphorylase DeoD-type (238 aa).

Position 4 (histidine 4) interacts with a purine D-ribonucleoside. Residues glycine 20, arginine 24, arginine 43, and 87–90 each bind phosphate; that span reads RVGS. Residues 179 to 181 and 203 to 204 contribute to the a purine D-ribonucleoside site; these read EME and SD. Aspartate 204 acts as the Proton donor in catalysis.

Belongs to the PNP/UDP phosphorylase family. In terms of assembly, homohexamer; trimer of homodimers.

It carries out the reaction a purine D-ribonucleoside + phosphate = a purine nucleobase + alpha-D-ribose 1-phosphate. The enzyme catalyses a purine 2'-deoxy-D-ribonucleoside + phosphate = a purine nucleobase + 2-deoxy-alpha-D-ribose 1-phosphate. In terms of biological role, catalyzes the reversible phosphorolytic breakdown of the N-glycosidic bond in the beta-(deoxy)ribonucleoside molecules, with the formation of the corresponding free purine bases and pentose-1-phosphate. The protein is Purine nucleoside phosphorylase DeoD-type of Actinobacillus succinogenes (strain ATCC 55618 / DSM 22257 / CCUG 43843 / 130Z).